A 455-amino-acid chain; its full sequence is Argininosuccinate lyase (455 aa).

It belongs to the lyase 1 family. Argininosuccinate lyase subfamily.

It is found in the cytoplasm. The catalysed reaction is 2-(N(omega)-L-arginino)succinate = fumarate + L-arginine. Its pathway is amino-acid biosynthesis; L-arginine biosynthesis; L-arginine from L-ornithine and carbamoyl phosphate: step 3/3. The sequence is that of Argininosuccinate lyase from Shewanella oneidensis (strain ATCC 700550 / JCM 31522 / CIP 106686 / LMG 19005 / NCIMB 14063 / MR-1).